The chain runs to 350 residues: Dihydroorotase (350 aa).

Zn(2+) contacts are provided by His17 and His19. Substrate is bound by residues 19–21 (HLR) and Asn45. Zn(2+) is bound by residues Lys103, His140, and His178. The residue at position 103 (Lys103) is an N6-carboxylysine. A substrate-binding site is contributed by His140. Leu224 contacts substrate. Position 252 (Asp252) interacts with Zn(2+). Asp252 is a catalytic residue. 2 residues coordinate substrate: His256 and Ala268.

This sequence belongs to the metallo-dependent hydrolases superfamily. DHOase family. Class II DHOase subfamily. Homodimer. Requires Zn(2+) as cofactor.

The enzyme catalyses (S)-dihydroorotate + H2O = N-carbamoyl-L-aspartate + H(+). It functions in the pathway pyrimidine metabolism; UMP biosynthesis via de novo pathway; (S)-dihydroorotate from bicarbonate: step 3/3. In terms of biological role, catalyzes the reversible cyclization of carbamoyl aspartate to dihydroorotate. This chain is Dihydroorotase, found in Buchnera aphidicola subsp. Acyrthosiphon pisum (strain 5A).